The chain runs to 1007 residues: Protein vav-1 (1007 aa).

The region spanning 37–151 is the Calponin-homology (CH) domain; sequence CDLWIGCARW…TLSFLSHTKE (115 aa). Residues 151–239 are AC; that stretch reads ESLSRGVDPF…ENDLQNTPTL (89 aa). The disordered stretch occupies residues 153–176; sequence LSRGVDPFPDTDNNQEGTSNGSEF. Residues 163–174 are compositionally biased toward polar residues; sequence TDNNQEGTSNGS. A phosphotyrosine mark is found at tyrosine 183, tyrosine 200, and tyrosine 217. The DH domain maps to 240–437; the sequence is KRNRCIRELY…EDVCNYINEE (198 aa). The 129-residue stretch at 470–598 folds into the PH domain; sequence RVNLDGEVKM…WMTALLLSKS (129 aa). Residues 610-664 form a Phorbol-ester/DAG-type zinc finger; the sequence is NHKVAFHSFRVDVKNPATCDVCDKLMKGLQYQGYKCESCNMSMHKECLGLKKCEA. An SH3 1 domain is found at 688–750; sequence HEGDIVVANS…HLDHVSQSRT (63 aa). The tract at residues 778–817 is disordered; sequence LPNKLLSDGSSRSLSGPHGSRSSRNSSSSTINGSMDSVPR. Positions 782–814 are enriched in low complexity; that stretch reads LLSDGSSRSLSGPHGSRSSRNSSSSTINGSMDS. The 95-residue stretch at 831–925 folds into the SH2 domain; sequence WYMGEMERAK…ALDTCLKNPY (95 aa). The SH3 2 domain occupies 926–991; that stretch reads SQCKVFKAVH…PLSYVKPYDP (66 aa).

GEF activity is regulated by phosphorylation on tyrosine residues. In terms of tissue distribution, strong expression in the pharynx, proximal gonad, spermatheca, intestine and rectal epithelia.

Functionally, acts as a guanine nucleotide exchange factor (GEF) for Rho GTPase. Has a critical roles in the generation of rhythmic behaviors: feeding, defecation and ovulation by dynamically regulating the concentration of intracellular calcium. Plays a role in male tail tip morphogenesis. This is Protein vav-1 from Caenorhabditis elegans.